We begin with the raw amino-acid sequence, 398 residues long: CCA-adding enzyme (398 aa).

ATP contacts are provided by G32 and R35. CTP is bound by residues G32 and R35. Residues D45 and D47 each coordinate Mg(2+). ATP-binding residues include R116, D159, R162, R165, and R168. Residues R116, D159, R162, R165, and R168 each coordinate CTP.

It belongs to the tRNA nucleotidyltransferase/poly(A) polymerase family. Bacterial CCA-adding enzyme type 3 subfamily. In terms of assembly, homodimer. The cofactor is Mg(2+).

The catalysed reaction is a tRNA precursor + 2 CTP + ATP = a tRNA with a 3' CCA end + 3 diphosphate. The enzyme catalyses a tRNA with a 3' CCA end + 2 CTP + ATP = a tRNA with a 3' CCACCA end + 3 diphosphate. Functionally, catalyzes the addition and repair of the essential 3'-terminal CCA sequence in tRNAs without using a nucleic acid template. Adds these three nucleotides in the order of C, C, and A to the tRNA nucleotide-73, using CTP and ATP as substrates and producing inorganic pyrophosphate. tRNA 3'-terminal CCA addition is required both for tRNA processing and repair. Also involved in tRNA surveillance by mediating tandem CCA addition to generate a CCACCA at the 3' terminus of unstable tRNAs. While stable tRNAs receive only 3'-terminal CCA, unstable tRNAs are marked with CCACCA and rapidly degraded. This chain is CCA-adding enzyme, found in Lactobacillus johnsonii (strain CNCM I-12250 / La1 / NCC 533).